We begin with the raw amino-acid sequence, 439 residues long: Protein translocase subunit SecY (439 aa).

Transmembrane regions (helical) follow at residues 28-48 (ILIT…PVPG), 73-93 (IFSG…LPYI), 127-147 (LTRY…AVWV), 156-176 (PLFT…VMWI), 179-199 (LITE…NIVA), 220-240 (VGGI…IVFV), 276-296 (GVMP…LANF), 318-338 (IYAL…SSLI), 375-395 (LTIL…AVEG), and 401-421 (TFQG…IDTA).

The protein belongs to the SecY/SEC61-alpha family. In terms of assembly, component of the Sec protein translocase complex. Heterotrimer consisting of SecY, SecE and SecG subunits. The heterotrimers can form oligomers, although 1 heterotrimer is thought to be able to translocate proteins. Interacts with the ribosome. Interacts with SecDF, and other proteins may be involved. Interacts with SecA.

Its subcellular location is the cell inner membrane. It is found in the cellular thylakoid membrane. In terms of biological role, the central subunit of the protein translocation channel SecYEG. Consists of two halves formed by TMs 1-5 and 6-10. These two domains form a lateral gate at the front which open onto the bilayer between TMs 2 and 7, and are clamped together by SecE at the back. The channel is closed by both a pore ring composed of hydrophobic SecY resides and a short helix (helix 2A) on the extracellular side of the membrane which forms a plug. The plug probably moves laterally to allow the channel to open. The ring and the pore may move independently. This is Protein translocase subunit SecY from Synechococcus elongatus (strain ATCC 33912 / PCC 7942 / FACHB-805) (Anacystis nidulans R2).